The sequence spans 362 residues: Lactosylceramide alpha-2,3-sialyltransferase (362 aa).

At 1–5 (MRRPS) the chain is on the cytoplasmic side. A helical; Signal-anchor for type II membrane protein transmembrane segment spans residues 6–26 (LLLKDILKCTLLVFGVWILYI). The Lumenal segment spans residues 27-362 (LKLNYTTEEC…DLSGGIDREF (336 aa)). 4 N-linked (GlcNAc...) asparagine glycosylation sites follow: N30, N180, N224, and N334. C139 and C297 form a disulfide bridge.

Belongs to the glycosyltransferase 29 family.

The protein resides in the golgi apparatus membrane. It catalyses the reaction a beta-D-Gal-(1-&gt;4)-beta-D-Glc-(1&lt;-&gt;1)-Cer(d18:1(4E)) + CMP-N-acetyl-beta-neuraminate = a ganglioside GM3 (d18:1(4E)) + CMP + H(+). It carries out the reaction ganglioside GA2 (d18:1(4E)/18:0) + CMP-N-acetyl-beta-neuraminate = ganglioside GM2 (d18:1(4E)/18:0) + CMP + H(+). The enzyme catalyses a beta-D-Gal-(1&lt;-&gt;1')-ceramide + CMP-N-acetyl-beta-neuraminate = N-acetyl-alpha-neuraminosyl-(2-&gt;3)-beta-D-galactosyl-(1&lt;-&gt;1')-ceramide + CMP + H(+). The catalysed reaction is ganglioside GA1 (d18:1(4E)/18:0) + CMP-N-acetyl-beta-neuraminate = ganglioside GM1 (d18:1(4E)/18:0) + CMP + H(+). Functionally, transfers the sialyl group (N-acetyl-alpha-neuraminyl or NeuAc) from CMP-NeuAc to the non-reducing terminal galactose (Gal) of glycosphingolipids forming gangliosides (important molecules involved in the regulation of multiple cellular processes, including cell proliferation and differentiation, apoptosis, embryogenesis, development, and oncogenesis). Mainly involved in the biosynthesis of ganglioside GM3 but can also use different glycolipids as substrate acceptors such as D-galactosylceramide (GalCer), asialo-GM2 (GA2) and asialo-GM1 (GA1), although less preferentially than beta-D-Gal-(1-&gt;4)-beta-D-Glc-(1&lt;-&gt;1)-Cer (LacCer). The chain is Lactosylceramide alpha-2,3-sialyltransferase (ST3GAL5) from Pan troglodytes (Chimpanzee).